A 147-amino-acid polypeptide reads, in one-letter code: Hemoglobin subunit epsilon (147 aa).

Residues 3–147 (HFTAEEKAAV…VAIALAHKYH (145 aa)) form the Globin domain. Serine 14 and serine 51 each carry phosphoserine. Residues histidine 64 and histidine 93 each contribute to the heme b site.

It belongs to the globin family. In terms of assembly, heterotetramer of two alpha chains and two epsilon chains in early embryonic hemoglobin Gower-2; two zeta chains and two epsilon chains in early embryonic hemoglobin Gower-1. In terms of tissue distribution, red blood cells.

The epsilon chain is a beta-type chain of early mammalian embryonic hemoglobin. This is Hemoglobin subunit epsilon (HBE1) from Symphalangus syndactylus (Siamang).